The primary structure comprises 138 residues: Aspartate 1-decarboxylase (138 aa).

Ser-25 functions as the Schiff-base intermediate with substrate; via pyruvic acid in the catalytic mechanism. Ser-25 is modified (pyruvic acid (Ser)). Position 57 (Thr-57) interacts with substrate. Residue Tyr-58 is the Proton donor of the active site. Residue 73–75 (GAA) coordinates substrate. The tract at residues 116-138 (ELGGDPAQVPDGSGLKNPRHPEA) is disordered.

The protein belongs to the PanD family. In terms of assembly, heterooctamer of four alpha and four beta subunits. The cofactor is pyruvate. Is synthesized initially as an inactive proenzyme, which is activated by self-cleavage at a specific serine bond to produce a beta-subunit with a hydroxyl group at its C-terminus and an alpha-subunit with a pyruvoyl group at its N-terminus.

It is found in the cytoplasm. It catalyses the reaction L-aspartate + H(+) = beta-alanine + CO2. The protein operates within cofactor biosynthesis; (R)-pantothenate biosynthesis; beta-alanine from L-aspartate: step 1/1. In terms of biological role, catalyzes the pyruvoyl-dependent decarboxylation of aspartate to produce beta-alanine. This is Aspartate 1-decarboxylase from Corynebacterium jeikeium (strain K411).